Reading from the N-terminus, the 491-residue chain is Feruloyl-CoA synthase (491 aa).

Thr154 serves as a coordination point for Mg(2+). ATP-binding residues include Ala199, Gly291, and Thr295. Residue Glu296 participates in Mg(2+) binding. Positions 374 and 391 each coordinate ATP.

This sequence belongs to the ATP-dependent AMP-binding enzyme family. Requires Mg(2+) as cofactor.

The enzyme catalyses (E)-ferulate + ATP + CoA = (E)-feruloyl-CoA + AMP + diphosphate. Catalyzes the formation of (E)-feruloyl-CoA, AMP and diphosphate from (E)-ferulate, CoA and ATP. Involved in the degradation pathway of lignin-derived aromatic compounds of plant cell walls. Catalyzes the first enzymatic step in the conversion of ferulic acid into high value compound vanillin. The chain is Feruloyl-CoA synthase from Amycolatopsis sp.